We begin with the raw amino-acid sequence, 508 residues long: Photosystem II CP47 reaction center protein (508 aa).

The next 6 helical transmembrane spans lie at 21–36 (AVHL…WAGS), 101–115 (IVLS…IWHW), 140–156 (GIHL…FGAF), 203–218 (IAAG…FHLS), 237–252 (VLSS…AFVV), and 457–472 (TFAL…HGAR).

Belongs to the PsbB/PsbC family. PsbB subfamily. As to quaternary structure, PSII is composed of 1 copy each of membrane proteins PsbA, PsbB, PsbC, PsbD, PsbE, PsbF, PsbH, PsbI, PsbJ, PsbK, PsbL, PsbM, PsbT, PsbX, PsbY, PsbZ, Psb30/Ycf12, at least 3 peripheral proteins of the oxygen-evolving complex and a large number of cofactors. It forms dimeric complexes. Binds multiple chlorophylls. PSII binds additional chlorophylls, carotenoids and specific lipids. serves as cofactor.

Its subcellular location is the plastid. It is found in the chloroplast thylakoid membrane. In terms of biological role, one of the components of the core complex of photosystem II (PSII). It binds chlorophyll and helps catalyze the primary light-induced photochemical processes of PSII. PSII is a light-driven water:plastoquinone oxidoreductase, using light energy to abstract electrons from H(2)O, generating O(2) and a proton gradient subsequently used for ATP formation. This is Photosystem II CP47 reaction center protein from Marchantia polymorpha (Common liverwort).